Here is a 296-residue protein sequence, read N- to C-terminus: ATP phosphoribosyltransferase (296 aa).

The protein belongs to the ATP phosphoribosyltransferase family. Long subfamily. Mg(2+) is required as a cofactor.

It localises to the cytoplasm. It carries out the reaction 1-(5-phospho-beta-D-ribosyl)-ATP + diphosphate = 5-phospho-alpha-D-ribose 1-diphosphate + ATP. It participates in amino-acid biosynthesis; L-histidine biosynthesis; L-histidine from 5-phospho-alpha-D-ribose 1-diphosphate: step 1/9. Its activity is regulated as follows. Feedback inhibited by histidine. Functionally, catalyzes the condensation of ATP and 5-phosphoribose 1-diphosphate to form N'-(5'-phosphoribosyl)-ATP (PR-ATP). Has a crucial role in the pathway because the rate of histidine biosynthesis seems to be controlled primarily by regulation of HisG enzymatic activity. The chain is ATP phosphoribosyltransferase from Halorubrum lacusprofundi (strain ATCC 49239 / DSM 5036 / JCM 8891 / ACAM 34).